Reading from the N-terminus, the 712-residue chain is Patatin-like phospholipase domain-containing protein AFUA_1G04970 (712 aa).

Residues 1–13 are compositionally biased toward basic and acidic residues; sequence MTSDEKSATRDIY. The disordered stretch occupies residues 1 to 20; sequence MTSDEKSATRDIYDPNTLPD. The helical transmembrane segment at 85 to 105 threads the bilayer; sequence WPFLFTVFAWITVLGFAYTLT. Residues 275–466 form the PNPLA domain; it reads LCLSGGATFA…RTDIPIKALN (192 aa). Residues 306-310 carry the GXSXG motif; the sequence is GTSGG. Residue Ser308 is the Nucleophile of the active site. Asp453 acts as the Proton acceptor in catalysis. Positions 628–688 are disordered; that stretch reads RRRQDRAQEH…PDARRSSMFE (61 aa). 2 stretches are compositionally biased toward basic and acidic residues: residues 632 to 646 and 652 to 664; these read DRAQ…ERLD and RQSD…HYAE. Residues 667–676 show a composition bias toward polar residues; that stretch reads DSLSATSSRP. A compositionally biased stretch (basic and acidic residues) spans 677 to 688; that stretch reads HTPDARRSSMFE.

The protein belongs to the PLPL family.

The protein localises to the membrane. In terms of biological role, probable lipid hydrolase. This chain is Patatin-like phospholipase domain-containing protein AFUA_1G04970, found in Aspergillus fumigatus (strain ATCC MYA-4609 / CBS 101355 / FGSC A1100 / Af293) (Neosartorya fumigata).